The primary structure comprises 489 residues: Dihydropyrimidinase 1 (489 aa).

Zn(2+)-binding residues include histidine 61, histidine 63, and lysine 156. N6-carboxylysine is present on lysine 156. Position 161 (tyrosine 161) interacts with substrate. 2 residues coordinate Zn(2+): histidine 189 and histidine 245. Serine 295 serves as a coordination point for substrate. Aspartate 323 serves as a coordination point for Zn(2+). Asparagine 344 is a binding site for substrate.

This sequence belongs to the metallo-dependent hydrolases superfamily. Hydantoinase/dihydropyrimidinase family. Homotetramer. It depends on Zn(2+) as a cofactor. In terms of processing, carboxylation allows a single lysine to coordinate two zinc ions. In L1-L2 larvae, expressed in body hypodermal cells, hemidesmosomes and in a neuronal cell between the pharynx and ring neuropil. In adults, expression is seen in body hypodermal cells and pharynx.

It localises to the nucleus. It catalyses the reaction 5,6-dihydrouracil + H2O = 3-(carbamoylamino)propanoate + H(+). The chain is Dihydropyrimidinase 1 (dhp-1) from Caenorhabditis elegans.